The following is a 445-amino-acid chain: Gastrula zinc finger protein 5-1 (445 aa).

Residues 1–38 (MLQIKTEKEELDCGDDQNPKESSAVPLTDGASPEPQPQ) form a disordered region. Ser-89 carries the post-translational modification Phosphoserine; by CK2. A C2H2-type 1; atypical zinc finger spans residues 185-210 (FICCKCGDSFAHHSDLHTHLYACAGH). 7 C2H2-type zinc fingers span residues 239–261 (FKCT…HRIH), 267–289 (FTCT…SRTH), 295–317 (YVCT…MRTH), 323–345 (YACK…QNSH), 351–373 (FICT…QRTH), 379–401 (FICS…QMIH), and 407–429 (FSCS…QRVH).

Its function is as follows. Binds to RNA homomers. This Xenopus laevis (African clawed frog) protein is Gastrula zinc finger protein 5-1.